The following is a 486-amino-acid chain: uncharacterized protein (486 aa).

2 ABC transporter domains span residues 2 to 241 (VEFK…KVFV) and 249 to 486 (FEKD…LLFL). 36–43 (GKNGEGKS) serves as a coordination point for ATP.

This sequence belongs to the ABC transporter superfamily.

This is an uncharacterized protein from Borreliella burgdorferi (strain ATCC 35210 / DSM 4680 / CIP 102532 / B31) (Borrelia burgdorferi).